Here is a 376-residue protein sequence, read N- to C-terminus: Succinyl-diaminopimelate desuccinylase (376 aa).

His-67 contributes to the Zn(2+) binding site. Residue Asp-69 is part of the active site. Asp-100 is a Zn(2+) binding site. The active-site Proton acceptor is the Glu-134. Zn(2+) contacts are provided by Glu-135, Glu-163, and His-349.

Belongs to the peptidase M20A family. DapE subfamily. Homodimer. The cofactor is Zn(2+). Co(2+) serves as cofactor.

The catalysed reaction is N-succinyl-(2S,6S)-2,6-diaminopimelate + H2O = (2S,6S)-2,6-diaminopimelate + succinate. It functions in the pathway amino-acid biosynthesis; L-lysine biosynthesis via DAP pathway; LL-2,6-diaminopimelate from (S)-tetrahydrodipicolinate (succinylase route): step 3/3. In terms of biological role, catalyzes the hydrolysis of N-succinyl-L,L-diaminopimelic acid (SDAP), forming succinate and LL-2,6-diaminopimelate (DAP), an intermediate involved in the bacterial biosynthesis of lysine and meso-diaminopimelic acid, an essential component of bacterial cell walls. This chain is Succinyl-diaminopimelate desuccinylase, found in Pseudoalteromonas atlantica (strain T6c / ATCC BAA-1087).